We begin with the raw amino-acid sequence, 255 residues long: Triosephosphate isomerase (255 aa).

A substrate-binding site is contributed by 10–12; it reads NWK. Catalysis depends on His96, which acts as the Electrophile. The active-site Proton acceptor is the Glu168. Substrate contacts are provided by residues Gly174, Ser213, and 234 to 235; that span reads GG.

Belongs to the triosephosphate isomerase family. As to quaternary structure, homodimer.

Its subcellular location is the cytoplasm. It carries out the reaction D-glyceraldehyde 3-phosphate = dihydroxyacetone phosphate. The protein operates within carbohydrate biosynthesis; gluconeogenesis. Its pathway is carbohydrate degradation; glycolysis; D-glyceraldehyde 3-phosphate from glycerone phosphate: step 1/1. Involved in the gluconeogenesis. Catalyzes stereospecifically the conversion of dihydroxyacetone phosphate (DHAP) to D-glyceraldehyde-3-phosphate (G3P). This Histophilus somni (strain 2336) (Haemophilus somnus) protein is Triosephosphate isomerase.